Here is a 246-residue protein sequence, read N- to C-terminus: Small ribosomal subunit protein uS3A (246 aa).

In terms of domain architecture, KH type-2 spans 21–92 (LNEFLTRELA…SVELYAEKVA (72 aa)). The interval 215–246 (DEIVPTTPISEQKAAKPDQPQPPAMPQPVATA) is disordered.

The protein belongs to the universal ribosomal protein uS3 family.

The protein resides in the cytoplasm. It is found in the nucleus. Its subcellular location is the nucleolus. The protein localises to the mitochondrion inner membrane. It localises to the cytoskeleton. The protein resides in the spindle. It catalyses the reaction 2'-deoxyribonucleotide-(2'-deoxyribose 5'-phosphate)-2'-deoxyribonucleotide-DNA = a 3'-end 2'-deoxyribonucleotide-(2,3-dehydro-2,3-deoxyribose 5'-phosphate)-DNA + a 5'-end 5'-phospho-2'-deoxyribonucleoside-DNA + H(+). Component of the small ribosomal subunit. The ribosome is a large ribonucleoprotein complex responsible for the synthesis of proteins in the cell. Has endonuclease activity and plays a role in repair of damaged DNA. Also involved in other processes including regulation of transcription, translation of its cognate mRNA, spindle formation and chromosome movement during mitosis, and apoptosis. This chain is Small ribosomal subunit protein uS3A (rps3-a), found in Xenopus laevis (African clawed frog).